We begin with the raw amino-acid sequence, 306 residues long: Mitochondrial glycine transporter (306 aa).

3 Solcar repeats span residues 25–114 (QPVI…LKQY), 121–205 (PTAL…TKNV), and 217–301 (LVPV…MMAK). A run of 6 helical transmembrane segments spans residues 31-56 (FLCG…TRLQ), 89-115 (GMSP…KQYF), 127-152 (VILG…TRYE), 180-203 (GLTA…SQTK), 221-247 (VNFS…KTHM), and 276-294 (GSVP…AWTV).

It belongs to the mitochondrial carrier (TC 2.A.29) family. SLC25A38 subfamily.

The protein resides in the mitochondrion inner membrane. The catalysed reaction is glycine(in) = glycine(out). Functionally, mitochondrial glycine transporter that imports glycine into the mitochondrial matrix. Plays an important role in providing glycine for the first enzymatic step in heme biosynthesis, the condensation of glycine with succinyl-CoA to produce 5-aminolevulinate (ALA) in the mitochondrial matrix. Required during erythropoiesis. Plays a role as pro-apoptotic protein that induces caspase-dependent apoptosis. The sequence is that of Mitochondrial glycine transporter from Ovis aries (Sheep).